A 214-amino-acid polypeptide reads, in one-letter code: Small ribosomal subunit protein uS4c (214 aa).

2 stretches are compositionally biased toward basic residues: residues 1 to 14 and 36 to 46; these read MSRY…KIKR and LSRPKPKKKSQ. The tract at residues 1-46 is disordered; the sequence is MSRYRGPRVKKIKRLGSLPGLTTKKPPIVVRDPRKLSRPKPKKKSQ. The region spanning 92–153 is the S4 RNA-binding domain; it reads MRLDNTLFRL…KEKSKALIQN (62 aa).

This sequence belongs to the universal ribosomal protein uS4 family. Part of the 30S ribosomal subunit. Contacts protein S5. The interaction surface between S4 and S5 is involved in control of translational fidelity.

Its subcellular location is the plastid. The protein resides in the chloroplast. Functionally, one of the primary rRNA binding proteins, it binds directly to 16S rRNA where it nucleates assembly of the body of the 30S subunit. In terms of biological role, with S5 and S12 plays an important role in translational accuracy. The polypeptide is Small ribosomal subunit protein uS4c (rps4) (Pelargonium hortorum (Common geranium)).